The primary structure comprises 30 residues: V-type proton ATPase catalytic subunit A isoform 1 (30 aa).

The protein belongs to the ATPase alpha/beta chains family. V-ATPase is a heteromultimeric enzyme composed of a peripheral catalytic V1 complex (main components: subunits A, B, C, D, E, and F) attached to an integral membrane V0 proton pore complex (main component: the proteolipid protein).

It carries out the reaction ATP + H2O + 4 H(+)(in) = ADP + phosphate + 5 H(+)(out). Catalytic subunit of the peripheral V1 complex of vacuolar ATPase. V-ATPase vacuolar ATPase is responsible for acidifying a variety of intracellular compartments in eukaryotic cells. In Psilotum nudum (Whisk fern), this protein is V-type proton ATPase catalytic subunit A isoform 1.